Reading from the N-terminus, the 121-residue chain is UPF0102 protein HRM2_30940 (121 aa).

This sequence belongs to the UPF0102 family.

In Desulforapulum autotrophicum (strain ATCC 43914 / DSM 3382 / VKM B-1955 / HRM2) (Desulfobacterium autotrophicum), this protein is UPF0102 protein HRM2_30940.